We begin with the raw amino-acid sequence, 206 residues long: Small ribosomal subunit protein uS4 (206 aa).

An S4 RNA-binding domain is found at 96-156 (CRLDNVVYRM…EKAKNQLRIV (61 aa)).

The protein belongs to the universal ribosomal protein uS4 family. As to quaternary structure, part of the 30S ribosomal subunit. Contacts protein S5. The interaction surface between S4 and S5 is involved in control of translational fidelity.

Functionally, one of the primary rRNA binding proteins, it binds directly to 16S rRNA where it nucleates assembly of the body of the 30S subunit. With S5 and S12 plays an important role in translational accuracy. This Pseudomonas savastanoi pv. phaseolicola (strain 1448A / Race 6) (Pseudomonas syringae pv. phaseolicola (strain 1448A / Race 6)) protein is Small ribosomal subunit protein uS4.